We begin with the raw amino-acid sequence, 506 residues long: Cobyric acid synthase (506 aa).

The GATase cobBQ-type domain occupies 251–448 (DITIAIVQLP…LHGLFDSDAF (198 aa)). Residue Cys-332 is the Nucleophile of the active site. Residue His-440 is part of the active site.

This sequence belongs to the CobB/CobQ family. CobQ subfamily.

It functions in the pathway cofactor biosynthesis; adenosylcobalamin biosynthesis. Catalyzes amidations at positions B, D, E, and G on adenosylcobyrinic A,C-diamide. NH(2) groups are provided by glutamine, and one molecule of ATP is hydrogenolyzed for each amidation. In Salmonella arizonae (strain ATCC BAA-731 / CDC346-86 / RSK2980), this protein is Cobyric acid synthase.